The primary structure comprises 814 residues: MDADASTITPEELDFIRQRALRRFDSIVPTAGREGTEIASDIFKGRTLAIYTSGGDSQGMNSAVRSITRMAIYCGCKVYLIYEGYEGMIEGGDFIKEATWNTVSDIIQQGGTIIGSARSSEFRTREGRLKAATNLINRGIGRLVCIGGDGSLTGANTFRLEWTDLVQELVKNQRVTAAAAKKIPYIQIVGLVGSIDNDFCGTDMTIGTDSALQRIISSIDAVVATAQSHQRAFVIEVMGRHCGYLALVAALASEADFCFIPEWPAPENWRDVLCDKLSQMRSEGQRLNIIIVAEGAIDRDGKAITAEDVKTAVKEKLKYDTRVTILGHVQRGGAPSAFDRLLGCRMGAEAVFALMEMTEESEPCVISIDGNVMVRVPLLKCVERTQMVQKAMADKDWTTAVMLRGRSFQRNLETYKLLTKMRTVEKDNLSEGHKFNVAVINVGAPAGGMNAAVRSYVRMALYHQCTVYGIEDSFEGLANGSFKQFKWSDVTNWAMNGGSFLGTQKSLPTEKTMPQLAAQLKKHNIQALLLVGGFEAYHSTIILAENREKYPEFCIPMCVIPCTISNNVPGTMVSLGSDTAINEICQMIDKIKQSATGTKRRVFIVETMGGYCGYLATLSALSSGADNAYIFEEPFTVQDLSDDVDVILSKMEVGAKRYLVVRNEWADKNLTTDFVQNLFDSEGKKNFTTRVNVLGHVQQGGSPTPFDRNMGTKLAARALEFLLIQLKENLTADNKVIAKSAHTATLLGLKGRKVVFTPVQDLKKETDFEHRLPSEQWWMALRPLLRVLARHRSTVESSAILESVEEESADSHMF.

Residues 1–420 (MDADASTITP…NLETYKLLTK (420 aa)) are N-terminal catalytic PFK domain 1. Residues glycine 55, 118–119 (RS), and 148–151 (GDGS) each bind ATP. Aspartate 149 contacts Mg(2+). Residues 194–196 (SID), arginine 231, 238–240 (MGR), glutamate 294, arginine 322, and 328–331 (HVQR) contribute to the substrate site. Catalysis depends on aspartate 196, which acts as the Proton acceptor. Residues 421 to 435 (MRTVEKDNLSEGHKF) are interdomain linker. Positions 436 to 814 (NVAVINVGAP…EEESADSHMF (379 aa)) are C-terminal regulatory PFK domain 2. Residues lysine 505, 563-567 (TISNN), arginine 601, 608-610 (MGG), glutamate 664, arginine 690, 696-699 (HVQQ), and arginine 771 each bind beta-D-fructose 2,6-bisphosphate.

The protein belongs to the phosphofructokinase type A (PFKA) family. ATP-dependent PFK group I subfamily. Eukaryotic two domain clade 'E' sub-subfamily. Homotetramer. Requires Mg(2+) as cofactor.

It is found in the cytoplasm. It catalyses the reaction beta-D-fructose 6-phosphate + ATP = beta-D-fructose 1,6-bisphosphate + ADP + H(+). It participates in carbohydrate degradation; glycolysis; D-glyceraldehyde 3-phosphate and glycerone phosphate from D-glucose: step 3/4. With respect to regulation, allosterically activated by ADP, AMP, or fructose 2,6-bisphosphate, and allosterically inhibited by ATP or citrate. Catalyzes the phosphorylation of D-fructose 6-phosphate to fructose 1,6-bisphosphate by ATP, the first committing step of glycolysis. The protein is ATP-dependent 6-phosphofructokinase 1 of Caenorhabditis elegans.